A 302-amino-acid chain; its full sequence is Ribosomal protein L11 methyltransferase (302 aa).

S-adenosyl-L-methionine contacts are provided by T155, G176, D198, and N239.

The protein belongs to the methyltransferase superfamily. PrmA family.

It localises to the cytoplasm. It carries out the reaction L-lysyl-[protein] + 3 S-adenosyl-L-methionine = N(6),N(6),N(6)-trimethyl-L-lysyl-[protein] + 3 S-adenosyl-L-homocysteine + 3 H(+). In terms of biological role, methylates ribosomal protein L11. This is Ribosomal protein L11 methyltransferase from Caldicellulosiruptor saccharolyticus (strain ATCC 43494 / DSM 8903 / Tp8T 6331).